The primary structure comprises 977 residues: Receptor protein-tyrosine kinase CEPR2 (977 aa).

An N-terminal signal peptide occupies residues 1–31; the sequence is MSRRPDLLRGSVVATVAATFLLFIFPPNVES. Residues 32–620 are Extracellular-facing; that stretch reads TVEKQALFRF…NVKRNSSLDG (589 aa). The N-linked (GlcNAc...) asparagine glycan is linked to Asn-85. 20 LRR repeats span residues 97 to 121, 122 to 146, 148 to 167, 168 to 192, 193 to 217, 219 to 241, 242 to 265, 266 to 288, 290 to 312, 313 to 338, 340 to 361, 363 to 385, 386 to 409, 411 to 433, 434 to 457, 458 to 481, 482 to 504, 506 to 529, 530 to 553, and 555 to 576; these read LTKLSTLSLPSNFISGRIPPEIVNC, KNLKVLNLTSNRLSGTIPNLSPLKS, EILDISGNFLNGEFQSWIGN, MNQLVSLGLGNNHYEEGIIPESIGG, LKKLTWLFLARSNLTGKIPNSIFDL, ALDTFDIANNAISDDFPILISRL, VNLTKIELFNNSLTGKIPPEIKNL, TRLREFDISSNQLSGVLPEELGV, KELRVFHCHENNFTGEFPSGFGD, LSHLTSLSIYRNNFSGEFPVNIGRFS, LDTVDISENEFTGPFPRFLCQN, KLQFLLALQNEFSGEIPRSYGEC, KSLLRLRINNNRLSGQVVEGFWSL, LAKMIDLSDNELTGEVSPQIGLS, TELSQLILQNNRFSGKIPRELGRL, TNIERIYLSNNNLSGEIPMEVGDL, KELSSLHLENNSLTGFIPKELKN, VKLVDLNLAKNFLTGEIPNSLSQI, ASLNSLDFSGNRLTGEIPASLVKL, and LSFIDLSGNQLSGRIPPDLLAV. Residue Asn-128 is glycosylated (N-linked (GlcNAc...) asparagine). A glycan (N-linked (GlcNAc...) asparagine) is linked at Asn-205. Asn-243, Asn-251, and Asn-264 each carry an N-linked (GlcNAc...) asparagine glycan. Asn-301 and Asn-325 each carry an N-linked (GlcNAc...) asparagine glycan. N-linked (GlcNAc...) asparagine glycosylation is found at Asn-469 and Asn-491. Asn-615 is a glycosylation site (N-linked (GlcNAc...) asparagine). A helical membrane pass occupies residues 621 to 641; that stretch reads TLLFLALAIVVVVLVSGLFAL. At 642–977 the chain is on the cytoplasmic side; it reads RYRVVKIREL…SQDTTGKITV (336 aa). Residues 683 to 965 enclose the Protein kinase domain; it reads LDEDHVIGSG…RKLDDADPCV (283 aa). ATP contacts are provided by residues 689 to 697 and Lys-712; that span reads IGSGSAGKV. At Tyr-801 the chain carries Phosphotyrosine. Asp-814 functions as the Proton acceptor in the catalytic mechanism. Phosphoserine is present on Ser-846. Phosphotyrosine is present on residues Tyr-854 and Tyr-861.

It belongs to the protein kinase superfamily. Ser/Thr protein kinase family. In terms of assembly, interacts with the root-derived peptide CEP1. Binds to the ammonium transporter AMT1-1. In terms of tissue distribution, expressed in mature leaves, primary roots, and the root tips of both primary and lateral roots.

The protein localises to the cell membrane. The enzyme catalyses L-tyrosyl-[protein] + ATP = O-phospho-L-tyrosyl-[protein] + ADP + H(+). In terms of biological role, receptor kinase involved in the perception of C-terminally encoded plant signaling peptide (CEP) and subsequent regulation of root and shoot development. Together with CEPR1, mediates systemic nitrogen (N)-demand signaling upon the perception of root-derived peptides (e.g. CEP1) via the up-regulation of genes involved in N uptake and assimilation pathways. In Arabidopsis thaliana (Mouse-ear cress), this protein is Receptor protein-tyrosine kinase CEPR2.